Consider the following 266-residue polypeptide: 15-hydroxyprostaglandin dehydrogenase [NAD(+)] (266 aa).

NAD(+) is bound by residues 12 to 20 (GAAQGIGRA), 36 to 37 (DW), 63 to 65 (CDV), and Asn91. 2 residues coordinate substrate: Ser138 and Gln148. Tyr151 functions as the Proton acceptor in the catalytic mechanism. NAD(+)-binding positions include 151-155 (YCASK) and 186-188 (VNT).

This sequence belongs to the short-chain dehydrogenases/reductases (SDR) family. Homodimer. Detected in colon epithelium (at protein level).

Its subcellular location is the cytoplasm. The enzyme catalyses prostaglandin E2 + NAD(+) = 15-oxoprostaglandin E2 + NADH + H(+). It carries out the reaction (15S)-hydroxy-(5Z,8Z,11Z,13E)-eicosatetraenoate + NAD(+) = 15-oxo-(5Z,8Z,11Z,13E)-eicosatetraenoate + NADH + H(+). The catalysed reaction is (11R)-hydroxy-(5Z,8Z,12E,14Z)-eicosatetraenoate + NAD(+) = 11-oxo-(5Z,8Z,12E,14Z)-eicosatetraenoate + NADH + H(+). It catalyses the reaction lipoxin A4 + NAD(+) = 15-oxo-(5S,6R)-dihydroxy-(7E,9E,11Z,13E)-eicosatetraenoate + NADH + H(+). The enzyme catalyses 15-oxo-(5S,6R)-dihydroxy-(7E,9E,11Z)-eicosatrienoate + NADH + H(+) = (5S,6R,15S)-trihydroxy-(7E,9E,11Z)-eicosatrienoate + NAD(+). It carries out the reaction prostaglandin A1 + NAD(+) = 15-oxo-prostaglandin A1 + NADH + H(+). The catalysed reaction is prostaglandin E1 + NAD(+) = 15-oxoprostaglandin E1 + NADH + H(+). It catalyses the reaction 14-hydroxy-(4Z,7Z,10Z,12E,16Z,19Z)-docosahexaenoate + NAD(+) = 14-oxo-(4Z,7Z,10Z,12E,16Z,19Z)-docosahexaenoate + NADH + H(+). The enzyme catalyses resolvin E1 + NAD(+) = 18-oxo-resolvin E1 + NADH + H(+). It carries out the reaction resolvin D1 + NAD(+) = 8-oxoresolvin D1 + NADH + H(+). The catalysed reaction is resolvin D1 + NAD(+) = 17-oxoresolvin D1 + NADH + H(+). It catalyses the reaction resolvin D2 + NAD(+) = 7-oxoresolvin D2 + NADH + H(+). The enzyme catalyses resolvin D2 + NAD(+) = 16-oxoresolvin D2 + NADH + H(+). Its function is as follows. Catalyzes the NAD-dependent dehydrogenation (oxidation) of a broad array of hydroxylated polyunsaturated fatty acids (mainly eicosanoids and docosanoids, including prostaglandins, lipoxins and resolvins), yielding their corresponding keto (oxo) metabolites. Decreases the levels of the pro-proliferative prostaglandins such as prostaglandin E2 (whose activity is increased in cancer because of an increase in the expression of cyclooxygenase 2) and generates oxo-fatty acid products that can profoundly influence cell function by abrogating pro-inflammatory cytokine expression. Converts resolvins E1, D1 and D2 to their oxo products, which represents a mode of resolvin inactivation. Resolvin E1 plays important roles during the resolution phase of acute inflammation, while resolvins D1 and D2 have a unique role in obesity-induced adipose inflammation. The polypeptide is 15-hydroxyprostaglandin dehydrogenase [NAD(+)] (Homo sapiens (Human)).